We begin with the raw amino-acid sequence, 222 residues long: Glutathione S-transferase (222 aa).

A GST N-terminal domain is found at 3–83 (GKPKLHYTRG…YIAGKYNLYG (81 aa)). Residues Tyr9, Arg45, 54–55 (QV), and 67–68 (QS) each bind glutathione. The 124-residue stretch at 85–208 (DLKERAWIDM…QPGSQRKPPL (124 aa)) folds into the GST C-terminal domain.

This sequence belongs to the GST superfamily. Alpha family. Homodimer.

It localises to the cytoplasm. The catalysed reaction is RX + glutathione = an S-substituted glutathione + a halide anion + H(+). Functionally, conjugation of reduced glutathione to a wide number of exogenous and endogenous hydrophobic electrophiles. This is Glutathione S-transferase from Gallus gallus (Chicken).